We begin with the raw amino-acid sequence, 1205 residues long: Solute carrier family 12 member 2 (1205 aa).

Residue M1 is modified to N-acetylmethionine. Over residues 1–22 the composition is skewed to low complexity; it reads MEPGPARPRLAPAARPGWGRAA. The tract at residues 1–102 is disordered; the sequence is MEPGPARPRL…AAAAAAAAAA (102 aa). At 1 to 279 the chain is on the cytoplasmic side; that stretch reads MEPGPARPRL…AESKGVVKFG (279 aa). The segment covering 23-35 has biased composition (basic residues); the sequence is GCRRRGGPARHGR. Phosphoserine occurs at positions 74 and 76. The RFXV motif 1 signature appears at 77-80; sequence RFQV. Positions 87–102 are enriched in low complexity; sequence AGRAAAAAAAAAAAAA. The short motif at 133–136 is the RFXV motif 2 element; the sequence is RFRV. Residues 143–155 show a composition bias toward low complexity; it reads ASSSADDSLSDAA. Residues 143-187 are disordered; sequence ASSSADDSLSDAAGVGGDGPNVSFQNGGDTVLSEGSSLHSGGGSG. Residues T196, T200, T205, T210, and T223 each carry the phosphothreonine modification. S235 carries the post-translational modification Phosphoserine. T259 carries the phosphothreonine modification. A discontinuously helical membrane pass occupies residues 280-309; that stretch reads WIKGVLVRCMLNIWGVMLFIRLSWIVGQAG. Na(+) is bound at residue L290. K(+) is bound by residues N291 and I292. Residue W293 coordinates Na(+). 3 residues coordinate chloride: G294, V295, and M296. The helical transmembrane segment at 310–329 threads the bilayer; the sequence is IGLSVVVIAMATVVTTITGL. The Cytoplasmic portion of the chain corresponds to 330 to 360; the sequence is STSAIATNGFVRGGGAYYLISRSLGPEFGGA. Residues 361–388 traverse the membrane as a helical segment; that stretch reads IGLIFAFANAVAVAMYVVGFAETVVELL. F365 is a chloride binding site. Y376 serves as a coordination point for K(+). Topologically, residues 389 to 398 are extracellular; it reads KEHSILMIDE. The helical transmembrane segment at 399-422 threads the bilayer; sequence INDIRIIGAITVVILLGISVAGME. Over 423 to 425 the chain is Cytoplasmic; sequence WEA. A helical transmembrane segment spans residues 426-447; sequence KAQIVLLVILLLAIADFVIGTF. Residues 448–479 are Extracellular-facing; that stretch reads ISLESKKPKGFFGYKSEIFNENFGPDFREEET. The chain crosses the membrane as a discontinuously helical span at residues 480–497; it reads FFSVFAIFFPAATGILAG. 3 residues coordinate K(+): P489, A490, and T492. Positions 489 and 490 each coordinate chloride. Residues G493 and I494 each coordinate chloride. The Cytoplasmic portion of the chain corresponds to 498–512; sequence ANISGDLADPQSAIP. The helical transmembrane segment at 513–534 threads the bilayer; sequence KGTLLAILITTVVYIGIAVSVG. The Extracellular segment spans residues 535–591; the sequence is SCVVRDATGNVNDTITTELTNCTSAACKLNFDFSYCESNTCSYGLMNNFQVMSMVSG. 2 N-linked (GlcNAc...) asparagine glycosylation sites follow: N546 and N555. 2 disulfide bridges follow: C556/C561 and C570/C575. The helical transmembrane segment at 592–616 threads the bilayer; it reads FAPLISAGIFSATLSSALASLVSAP. Na(+)-binding residues include A603, S606, and S607. At 617–644 the chain is on the cytoplasmic side; sequence KIFQALCKDNIYPAFQMFAKGYGKNNEP. 2 helical membrane-spanning segments follow: residues 645-665 and 666-684; these read LRGY…AELN and VIAP…LINF. Chloride is bound by residues F675 and Y679. At 685–707 the chain is on the cytoplasmic side; that stretch reads SVFHASLAKSPGWRPAFKYYNMW. 2 helical membrane passes run 708-725 and 726-738; these read ISLI…VINW and WAAL…VLGL. The Cytoplasmic segment spans residues 739-1205; that stretch reads YIYVTYKKPD…NHQSVLTFYS (467 aa). A scissor helix region spans residues 754–771; the sequence is STQALTYLSALQHSIRLS. Residues S933 and S937 each carry the phosphoserine modification. Residues 953–986 form a disordered region; the sequence is SDQDTCKSSGEKSITQKDEEEDGKTPTQPLLKKE. The residue at position 987 (S987) is a Phosphoserine.

It belongs to the SLC12A transporter family. As to quaternary structure, homodimer; adopts a domain-swap conformation at the scissor helices connecting the transmembrane domain and C-terminal domain. Phosphorylated at Thr-196, Thr-200 and Thr-205 by OXSR1/OSR1 and STK39/SPAK downstream of WNK kinases (WNK1, WNK2, WNK3 or WNK4), promoting its activity. As to expression, widely expressed. High expression found in the cochlea, cochlear lateral wall, and the choroid plexus. Lower expression found in the cerebellum and the cortex.

It localises to the basolateral cell membrane. The catalysed reaction is K(+)(out) + 2 chloride(out) + Na(+)(out) = K(+)(in) + 2 chloride(in) + Na(+)(in). With respect to regulation, activated following phosphorylation by OXSR1/OSR1 and STK39/SPAK downstream of WNK kinases (WNK1, WNK2, WNK3 or WNK4). Inhibited by bumetanide and furosemide. Cation-chloride cotransporter which mediates the electroneutral transport of chloride, potassium and/or sodium ions across the membrane. Plays a vital role in the regulation of ionic balance and cell volume. In Mus musculus (Mouse), this protein is Solute carrier family 12 member 2 (Slc12a2).